The primary structure comprises 184 residues: GTP cyclohydrolase 1 (184 aa).

Cys75, His78, and Cys146 together coordinate Zn(2+).

The protein belongs to the GTP cyclohydrolase I family. In terms of assembly, homomer.

The catalysed reaction is GTP + H2O = 7,8-dihydroneopterin 3'-triphosphate + formate + H(+). Its pathway is cofactor biosynthesis; 7,8-dihydroneopterin triphosphate biosynthesis; 7,8-dihydroneopterin triphosphate from GTP: step 1/1. This Streptococcus pneumoniae (strain Taiwan19F-14) protein is GTP cyclohydrolase 1.